A 286-amino-acid polypeptide reads, in one-letter code: Type II restriction enzyme NgoMIV (286 aa).

Mg(2+) contacts are provided by aspartate 140 and cysteine 186.

Homotetramer. Mg(2+) serves as cofactor.

It carries out the reaction Endonucleolytic cleavage of DNA to give specific double-stranded fragments with terminal 5'-phosphates.. Its function is as follows. A P subtype restriction enzyme that recognizes the double-stranded sequence 5'-GCCGGC-3' and cleaves after G-1. The protein is Type II restriction enzyme NgoMIV (ngoMIVR) of Neisseria gonorrhoeae.